Here is a 434-residue protein sequence, read N- to C-terminus: Beta-enolase (434 aa).

At Ala-2 the chain carries N-acetylalanine. Thr-72 is subject to Phosphothreonine. Phosphoserine occurs at positions 83 and 157. Substrate contacts are provided by His-158 and Glu-167. Ser-176 bears the Phosphoserine mark. Thr-205 carries the post-translational modification Phosphothreonine. Glu-210 serves as the catalytic Proton donor. Thr-229 bears the Phosphothreonine mark. A Phosphotyrosine modification is found at Tyr-236. Asp-245 is a binding site for Mg(2+). Ser-263 carries the post-translational modification Phosphoserine. Glu-293 and Asp-318 together coordinate substrate. Residues Glu-293 and Asp-318 each coordinate Mg(2+). Lys-343 functions as the Proton acceptor in the catalytic mechanism. Residues 370–373 (SHRS) and Lys-394 each bind substrate.

The protein belongs to the enolase family. As to quaternary structure, mammalian enolase is composed of 3 isozyme subunits, alpha, beta and gamma, which can form homodimers or heterodimers which are cell-type and development-specific. Interacts with PNKD. It depends on Mg(2+) as a cofactor.

The protein resides in the cytoplasm. It catalyses the reaction (2R)-2-phosphoglycerate = phosphoenolpyruvate + H2O. Its pathway is carbohydrate degradation; glycolysis; pyruvate from D-glyceraldehyde 3-phosphate: step 4/5. Glycolytic enzyme that catalyzes the conversion of 2-phosphoglycerate to phosphoenolpyruvate. Appears to have a function in striated muscle development and regeneration. The protein is Beta-enolase (ENO3) of Bos taurus (Bovine).